The following is a 349-amino-acid chain: Ferredoxin--NADP reductase 1 (349 aa).

Glu36, Lys44, Tyr48, Ile88, Leu123, Asp290, and Ser331 together coordinate FAD.

The protein belongs to the ferredoxin--NADP reductase type 2 family. In terms of assembly, homodimer. The cofactor is FAD.

It catalyses the reaction 2 reduced [2Fe-2S]-[ferredoxin] + NADP(+) + H(+) = 2 oxidized [2Fe-2S]-[ferredoxin] + NADPH. The polypeptide is Ferredoxin--NADP reductase 1 (Bacillus thuringiensis (strain Al Hakam)).